The following is a 1354-amino-acid chain: Rho-associated protein kinase 1 (1354 aa).

Position 2 is an N-acetylserine (S2). Residues Y76–F338 form the Protein kinase domain. ATP is bound by residues I82–V90 and K105. D198 functions as the Proton acceptor in the catalytic mechanism. An AGC-kinase C-terminal domain is found at D341–A409. The interval F368 to R727 is interaction with FHOD1. Residues K422–K692 are a coiled coil. Residues S479–T556 form the REM-1 domain. K647 bears the N6-acetyllysine mark. An SHROOM3 binding region spans residues E707–S946. A RhoBD domain is found at T949–F1015. Residues L998–M1010 form an RHOA binding region. Residues N1011–S1102 are a coiled coil. S1105 and S1108 each carry phosphoserine. Residues N1115 to S1354 are auto-inhibitory. One can recognise a PH domain in the interval E1118–P1317. A Phorbol-ester/DAG-type zinc finger spans residues G1228–C1281. Positions P1320–S1354 are disordered. S1328 is subject to Phosphoserine. The span at R1330–S1354 shows a compositional bias: polar residues.

Belongs to the protein kinase superfamily. AGC Ser/Thr protein kinase family. In terms of assembly, homodimer. Interacts with RHOB, RHOC, MYLC2B and PTEN. Interacts with ITGB1BP1 (via N-terminus and PTB domain). Interacts with RHOA (activated by GTP), CHORDC1, DAPK3, GEM, JIP3, RHOE, PPP1R12A, PFN1, LIMK1, LIMK2 and TSG101. Interacts with FHOD1 in a Src-dependent manner. Interacts with SHROOM3. Requires Mg(2+) as cofactor. Post-translationally, autophosphorylated on serine and threonine residues. In terms of processing, cleaved by caspase-3 during apoptosis. This leads to constitutive activation of the kinase and membrane blebbing. As to expression, detected in blood platelets.

It is found in the cytoplasm. The protein localises to the cytoskeleton. The protein resides in the microtubule organizing center. Its subcellular location is the centrosome. It localises to the centriole. It is found in the golgi apparatus membrane. The protein localises to the cell projection. The protein resides in the bleb. Its subcellular location is the cell membrane. It localises to the lamellipodium. It is found in the ruffle. The enzyme catalyses L-seryl-[protein] + ATP = O-phospho-L-seryl-[protein] + ADP + H(+). The catalysed reaction is L-threonyl-[protein] + ATP = O-phospho-L-threonyl-[protein] + ADP + H(+). With respect to regulation, activated by RHOA binding. Inhibited by Y-27632. Protein kinase which is a key regulator of the actin cytoskeleton and cell polarity. Involved in regulation of smooth muscle contraction, actin cytoskeleton organization, stress fiber and focal adhesion formation, neurite retraction, cell adhesion and motility via phosphorylation of DAPK3, GFAP, LIMK1, LIMK2, MYL9/MLC2, TPPP, PFN1 and PPP1R12A. Phosphorylates FHOD1 and acts synergistically with it to promote SRC-dependent non-apoptotic plasma membrane blebbing. Phosphorylates JIP3 and regulates the recruitment of JNK to JIP3 upon UVB-induced stress. Acts as a suppressor of inflammatory cell migration by regulating PTEN phosphorylation and stability. Acts as a negative regulator of VEGF-induced angiogenic endothelial cell activation. Required for centrosome positioning and centrosome-dependent exit from mitosis. Plays a role in terminal erythroid differentiation. Inhibits podocyte motility via regulation of actin cytoskeletal dynamics and phosphorylation of CFL1. Promotes keratinocyte terminal differentiation. Involved in osteoblast compaction through the fibronectin fibrillogenesis cell-mediated matrix assembly process, essential for osteoblast mineralization. May regulate closure of the eyelids and ventral body wall by inducing the assembly of actomyosin bundles. In Homo sapiens (Human), this protein is Rho-associated protein kinase 1 (ROCK1).